Here is a 135-residue protein sequence, read N- to C-terminus: Small ribosomal subunit protein uS12 (135 aa).

Aspartate 89 is subject to 3-methylthioaspartic acid. The segment at 108 to 135 is disordered; it reads NKRTVSRSKYGTKKAKATDKKATDNKKK. The segment covering 111 to 122 has biased composition (basic residues); sequence TVSRSKYGTKKA. The segment covering 123 to 135 has biased composition (basic and acidic residues); sequence KATDKKATDNKKK.

The protein belongs to the universal ribosomal protein uS12 family. As to quaternary structure, part of the 30S ribosomal subunit. Contacts proteins S8 and S17. May interact with IF1 in the 30S initiation complex.

In terms of biological role, with S4 and S5 plays an important role in translational accuracy. Functionally, interacts with and stabilizes bases of the 16S rRNA that are involved in tRNA selection in the A site and with the mRNA backbone. Located at the interface of the 30S and 50S subunits, it traverses the body of the 30S subunit contacting proteins on the other side and probably holding the rRNA structure together. The combined cluster of proteins S8, S12 and S17 appears to hold together the shoulder and platform of the 30S subunit. The protein is Small ribosomal subunit protein uS12 of Helicobacter pylori (strain P12).